A 438-amino-acid polypeptide reads, in one-letter code: 23S rRNA (uracil(1939)-C(5))-methyltransferase RlmD (438 aa).

One can recognise a TRAM domain in the interval 10–69 (KASVNTKHQSVDVVRLDHNGAGIAFVDKKPVFIEGALPGEKAIIQFIEQKKQFSRAKLIK). The [4Fe-4S] cluster site is built by C82, C88, C91, and C169. Residues Q272, F301, N306, E322, N349, and D370 each coordinate S-adenosyl-L-methionine. C396 acts as the Nucleophile in catalysis.

It belongs to the class I-like SAM-binding methyltransferase superfamily. RNA M5U methyltransferase family. RlmD subfamily.

The catalysed reaction is uridine(1939) in 23S rRNA + S-adenosyl-L-methionine = 5-methyluridine(1939) in 23S rRNA + S-adenosyl-L-homocysteine + H(+). Functionally, catalyzes the formation of 5-methyl-uridine at position 1939 (m5U1939) in 23S rRNA. This Aliivibrio fischeri (strain ATCC 700601 / ES114) (Vibrio fischeri) protein is 23S rRNA (uracil(1939)-C(5))-methyltransferase RlmD.